The primary structure comprises 432 residues: Serine--tRNA ligase (432 aa).

235 to 237 (TSE) is an L-serine binding site. 266 to 268 (RSE) serves as a coordination point for ATP. Glu289 contributes to the L-serine binding site. 353 to 356 (EISS) serves as a coordination point for ATP. Ser388 contacts L-serine.

The protein belongs to the class-II aminoacyl-tRNA synthetase family. Type-1 seryl-tRNA synthetase subfamily. Homodimer. The tRNA molecule binds across the dimer.

The protein localises to the cytoplasm. The enzyme catalyses tRNA(Ser) + L-serine + ATP = L-seryl-tRNA(Ser) + AMP + diphosphate + H(+). The catalysed reaction is tRNA(Sec) + L-serine + ATP = L-seryl-tRNA(Sec) + AMP + diphosphate + H(+). Its pathway is aminoacyl-tRNA biosynthesis; selenocysteinyl-tRNA(Sec) biosynthesis; L-seryl-tRNA(Sec) from L-serine and tRNA(Sec): step 1/1. Catalyzes the attachment of serine to tRNA(Ser). Is also able to aminoacylate tRNA(Sec) with serine, to form the misacylated tRNA L-seryl-tRNA(Sec), which will be further converted into selenocysteinyl-tRNA(Sec). This is Serine--tRNA ligase from Paraburkholderia phymatum (strain DSM 17167 / CIP 108236 / LMG 21445 / STM815) (Burkholderia phymatum).